A 469-amino-acid chain; its full sequence is Type II secretion system protein HxcR (469 aa).

246 to 253 (GPTGSGKT) contributes to the ATP binding site.

This sequence belongs to the GSP E family.

The protein localises to the cytoplasm. The catalysed reaction is ATP + H2O + cellular proteinSide 1 = ADP + phosphate + cellular proteinSide 2.. In terms of biological role, ATPase component of the type II secretion system required for the energy-dependent secretion of extracellular factors from the periplasm. Acts as a molecular motor to provide the energy that is required for the export of proteins. The Hxc system is involved in the secretion of low-molecular-weight alkaline phosphatase L-AP (LapA). Is probably also involved in the secretion of the phosphate-binding protein PstS. The sequence is that of Type II secretion system protein HxcR from Pseudomonas aeruginosa (strain ATCC 15692 / DSM 22644 / CIP 104116 / JCM 14847 / LMG 12228 / 1C / PRS 101 / PAO1).